A 482-amino-acid polypeptide reads, in one-letter code: Pancreatic lipase-related protein 2 (482 aa).

A signal peptide spans 1-30 (MPMDVRGCLFPSVQMLLCWLVSLLLATVGG). C34 and C40 form a disulfide bridge. N-linked (GlcNAc...) asparagine glycosylation is present at N92. The required for galactolipase activity stretch occupies residues 106-118 (IHGFIDKGEEGWL). C122 and C133 form a disulfide bridge. S184 serves as the catalytic Nucleophile. The active-site Charge relay system is the D208. Residues E219, R222, D224, and D227 each coordinate Ca(2+). A disulfide bridge links C269 with C293. Positions 270-292 (QKNILSTIVDINGIWEGTRNFAA) are required for galactolipase activity. H295 (charge relay system) is an active-site residue. Disulfide bonds link C317–C328 and C331–C336. Residues N366 and N441 are each glycosylated (N-linked (GlcNAc...) asparagine). In terms of domain architecture, PLAT spans 370–482 (WRYKVSVTLS…EDVLQSLYPC (113 aa)). C466 and C482 form a disulfide bridge.

The protein belongs to the AB hydrolase superfamily. Lipase family. In terms of tissue distribution, expressed in acinar cells of pancreas (at protein level).

It is found in the secreted. Its subcellular location is the zymogen granule membrane. The protein localises to the cell projection. The protein resides in the neuron projection. The enzyme catalyses a triacylglycerol + H2O = a diacylglycerol + a fatty acid + H(+). The catalysed reaction is a 1,2-diacyl-3-O-(beta-D-galactosyl)-sn-glycerol + 2 H2O = 3-beta-D-galactosyl-sn-glycerol + 2 a fatty acid + 2 H(+). It carries out the reaction 1,2,3-tri-(9Z-octadecenoyl)-glycerol + H2O = di-(9Z)-octadecenoylglycerol + (9Z)-octadecenoate + H(+). It catalyses the reaction di-(9Z)-octadecenoylglycerol + H2O = (9Z-octadecenoyl)-glycerol + (9Z)-octadecenoate + H(+). The enzyme catalyses (9Z-octadecenoyl)-glycerol + H2O = glycerol + (9Z)-octadecenoate + H(+). The catalysed reaction is 1-(9Z-octadecenoyl)-glycerol + H2O = glycerol + (9Z)-octadecenoate + H(+). It carries out the reaction 1,2,3-tripropanoylglycerol + H2O = dipropanoylglycerol + propanoate + H(+). It catalyses the reaction 1,2,3-tributanoylglycerol + H2O = dibutanoylglycerol + butanoate + H(+). The enzyme catalyses 1,2,3-trioctanoylglycerol + H2O = dioctanoylglycerol + octanoate + H(+). The catalysed reaction is 1,2-didecanoylglycerol + H2O = decanoylglycerol + decanoate + H(+). It carries out the reaction long chain 1,2-diacyl-3-O-beta-D-galactosyl-sn-glycerol + H2O = long chain acyl-3-O-beta-D-galactosyl-sn-glycerol + a fatty acid + H(+). It catalyses the reaction 1,2-dioctanoyl-3-O-beta-D-galactosyl-sn-glycerol + H2O = octanoyl-3-(beta-D-galactosyl)-sn-glycerol + octanoate + H(+). The enzyme catalyses 1,2-didodecanoyl-3-beta-D-galactosyl-sn-glycerol + H2O = dodecanoyl-3-beta-D-galactosyl-sn-glycerol + dodecanoate + H(+). The catalysed reaction is 1-beta-D-galactosyl-2,3-didodecanoyl-sn-glycerol + H2O = 1-beta-D-galactosyl-dodecanoyl-sn-glycerol + dodecanoate + H(+). It carries out the reaction a 1,2-diacyl-3-O-[alpha-D-galactosyl-(1-&gt;6)-beta-D-galactosyl]-sn-glycerol + H2O = acyl-3-O-[alpha-D-galactosyl-(1-&gt;6)-beta-D-galactosyl]-sn-glycerol + a fatty acid + H(+). It catalyses the reaction long chain 1,2-diacyl-3-O-[alpha-D-galactosyl-(1-&gt;6)-beta-D-galactosyl]-sn-glycerol + H2O = long chain acyl-3-O-[alpha-D-galactosyl-(1-&gt;6)-beta-D-galactosyl]-sn-glycerol + a fatty acid + H(+). The enzyme catalyses 1,2-dioctanoyl-3-O-[alpha-D-galactosyl-(1-&gt;6)-beta-D-galactosyl]-sn-glycerol + H2O = octanoyl-3-O-[alpha-D-galactosyl-(1-&gt;6)-beta-D-galactosyl]-sn-glycerol + octanoate + H(+). The catalysed reaction is 1,2-didodecanoyl-3-O-[alpha-D-galactosyl-(1-&gt;6)-beta-D-galactosyl]-sn-glycerol + H2O = dodecanoyl-3-O-[alpha-D-galactosyl-(1-&gt;6)-beta-D-galactosyl]-sn-glycerol + dodecanoate + H(+). It carries out the reaction a 1,2-diacyl-sn-glycero-3-phosphocholine + H2O = a monoacyl-sn-glycero-3-phosphocholine + a fatty acid + H(+). The protein operates within glycerolipid metabolism; triacylglycerol degradation. It participates in glycolipid metabolism. Its activity is regulated as follows. CLPS stimulates triacylglycerol lipase activity. Triacylglycerol lipase activity is not inhibited by increasing bile salt concentration. Its function is as follows. Lipase that primarily hydrolyzes triglycerides and galactosylglycerides. In neonates, may play a major role in pancreatic digestion of dietary fats such as milk fat globules enriched in long-chain triglycerides. Hydrolyzes short-, medium- and long-chain fatty acyls in triglycerides without apparent positional specificity. Can completely deacylate triacylglycerols. When the liver matures and bile salt synthesis increases, likely functions mainly as a galactolipase and monoacylglycerol lipase. Hydrolyzes monogalactosyldiglycerols (MGDG) and digalactosyldiacylglycerols (DGDG) present in a plant-based diet, releasing long-chain polyunsaturated fatty acids. Hydrolyzes medium- and long-chain fatty acyls in galactolipids. May act together with LIPF to hydrolyze partially digested triglycerides. Hydrolyzes long-chain monoglycerides with high efficiency. In cytotoxic T cells, contributes to perforin-dependent cell lysis, but is unlikely to mediate direct cytotoxicity. Also has low phospholipase activity. In neurons, required for the localization of the phospholipid 1-oleoyl-2-palmitoyl-PC (OPPC) to neurite tips through acyl chain remodeling of membrane phospholipids. The resulting OPPC-rich lipid membrane domain recruits the t-SNARE protein STX4 by selectively interacting with the STX4 transmembrane domain and this promotes surface expression of the dopamine transporter SLC6A3/DAT at neurite tips by facilitating fusion of SLC6A3-containing transport vesicles with the plasma membrane. This Mus musculus (Mouse) protein is Pancreatic lipase-related protein 2.